We begin with the raw amino-acid sequence, 349 residues long: MGRKKIQISRILDQRNRQVTFTKRKFGLMKKAYELSVLCDCDIALIIFNSAQRLFQYASSDMDRVLLKYTEYSEPHESRTNADILQTLKRRGVGLDGPELDMEEGPEGPGEKLLRTLGGDRGSASPRPRIYPVAPAMSVSELSYRVPPATPGCDPGGLGEVPSVHSRPAYFRPPGLGHPIFSPSHLASKTPPPLYLATDGRRPDLPPGLVGARGGLGTSRSLYSGLQSPGAPGPALGSFAFLPSGSTDCSPGDAAQGPLQPSPWPPTRDAVDPARPVARSLCKEGPPSRGASPPTPPVSIKSERLSPVTGTSGDFPRSFPYPLLLARPLAEPLRPSASLHRLTPDSWPR.

The region spanning 3 to 57 is the MADS-box domain; that stretch reads RKKIQISRILDQRNRQVTFTKRKFGLMKKAYELSVLCDCDIALIIFNSAQRLFQY. The mef2-type DNA-binding region spans 58-86; the sequence is ASSDMDRVLLKYTEYSEPHESRTNADILQ. 2 disordered regions span residues 237–317 and 330–349; these read GSFA…DFPR and AEPLRPSASLHRLTPDSWPR.

This sequence belongs to the MEF2 family. Heterodimer. Interacts with HDAC9. Interacts with HDAC7. In terms of tissue distribution, highest expression found in embryonic heart and skeletal muscle. Low levels found in adult spleen, lung and testis while no expression is found in adult heart, brain or skeletal muscle.

The protein localises to the nucleus. Its function is as follows. Transcriptional activator which binds specifically to the MEF2 element, 5'-YTA[AT](4)TAR-3', found in numerous muscle-specific genes. Activates transcription via this element. May be involved in muscle-specific and/or growth factor-related transcription. This is Myocyte-specific enhancer factor 2B (Mef2b) from Mus musculus (Mouse).